The primary structure comprises 334 residues: Protein RecA (334 aa).

Residue 65–72 coordinates ATP; that stretch reads GNESSGKT.

The protein belongs to the RecA family.

The protein localises to the cytoplasm. Its function is as follows. Can catalyze the hydrolysis of ATP in the presence of single-stranded DNA, the ATP-dependent uptake of single-stranded DNA by duplex DNA, and the ATP-dependent hybridization of homologous single-stranded DNAs. It interacts with LexA causing its activation and leading to its autocatalytic cleavage. The protein is Protein RecA of Ureaplasma parvum serovar 3 (strain ATCC 27815 / 27 / NCTC 11736).